We begin with the raw amino-acid sequence, 117 residues long: Large ribosomal subunit protein bL20 (117 aa).

This sequence belongs to the bacterial ribosomal protein bL20 family.

Binds directly to 23S ribosomal RNA and is necessary for the in vitro assembly process of the 50S ribosomal subunit. It is not involved in the protein synthesizing functions of that subunit. The protein is Large ribosomal subunit protein bL20 of Vibrio campbellii (strain ATCC BAA-1116).